The sequence spans 404 residues: Putative replication protein C (404 aa).

Positions P249–R287 are disordered.

To A.rhizogenes possible replication protein C (RepC).

In Sinorhizobium fredii (strain NBRC 101917 / NGR234), this protein is Putative replication protein C.